A 468-amino-acid chain; its full sequence is Meiotically up-regulated gene 111 protein (468 aa).

Transmembrane regions (helical) follow at residues 13 to 33, 59 to 79, 92 to 112, 116 to 136, 158 to 178, 190 to 210, 285 to 305, 330 to 350, 356 to 376, 382 to 402, 417 to 437, and 446 to 466; these read LVLIYLWYLVDCTSFSMNSVT, IVSASSCLLQYLVALVVVPFY, VFTTWVGEEYFFFASTLSILY, FPTCAYFVIFSISFLLGISGT, IVVLNSIFVVSSCIGPFLGSI, LISWTIHFINFVFHSLLAVFF, PIPIVLLCFFLYSLLTPFFDI, FGSLLTCSVCLFLTYVGGFSV, TMLIGLTATTLIIFILYFATA, LALFYGITSSIGPSIHGLVAA, ALLEASATFISYPFQSLAFIV, and FFIGPICICLLGSISSYLLLG.

Its subcellular location is the membrane. Its function is as follows. Has a role in meiosis. This chain is Meiotically up-regulated gene 111 protein (mug111), found in Schizosaccharomyces pombe (strain 972 / ATCC 24843) (Fission yeast).